We begin with the raw amino-acid sequence, 369 residues long: Peptide chain release factor 2 (369 aa).

At Q251 the chain carries N5-methylglutamine.

It belongs to the prokaryotic/mitochondrial release factor family. In terms of processing, methylated by PrmC. Methylation increases the termination efficiency of RF2.

It is found in the cytoplasm. Its function is as follows. Peptide chain release factor 2 directs the termination of translation in response to the peptide chain termination codons UGA and UAA. This chain is Peptide chain release factor 2 (prfB), found in Chlamydia pneumoniae (Chlamydophila pneumoniae).